Reading from the N-terminus, the 399-residue chain is Nicotinate phosphoribosyltransferase (399 aa).

Histidine 221 is subject to Phosphohistidine; by autocatalysis.

It belongs to the NAPRTase family. Post-translationally, transiently phosphorylated on a His residue during the reaction cycle. Phosphorylation strongly increases the affinity for substrates and increases the rate of nicotinate D-ribonucleotide production. Dephosphorylation regenerates the low-affinity form of the enzyme, leading to product release.

It carries out the reaction nicotinate + 5-phospho-alpha-D-ribose 1-diphosphate + ATP + H2O = nicotinate beta-D-ribonucleotide + ADP + phosphate + diphosphate. The protein operates within cofactor biosynthesis; NAD(+) biosynthesis; nicotinate D-ribonucleotide from nicotinate: step 1/1. Functionally, catalyzes the synthesis of beta-nicotinate D-ribonucleotide from nicotinate and 5-phospho-D-ribose 1-phosphate at the expense of ATP. This Buchnera aphidicola subsp. Acyrthosiphon pisum (strain 5A) protein is Nicotinate phosphoribosyltransferase.